Here is a 270-residue protein sequence, read N- to C-terminus: B3 domain-containing protein Os03g0212300 (270 aa).

2 DNA-binding regions (TF-B3) span residues 13 to 110 (FEFF…FDET) and 158 to 265 (VTLR…RKAD).

Its subcellular location is the nucleus. In Oryza sativa subsp. japonica (Rice), this protein is B3 domain-containing protein Os03g0212300.